A 557-amino-acid chain; its full sequence is Dihydroxy-acid dehydratase (557 aa).

Aspartate 78 lines the Mg(2+) pocket. Cysteine 119 is a [2Fe-2S] cluster binding site. Positions 120 and 121 each coordinate Mg(2+). Lysine 121 is modified (N6-carboxylysine). [2Fe-2S] cluster is bound at residue cysteine 191. Mg(2+) is bound at residue glutamate 442. Residue serine 468 is the Proton acceptor of the active site.

It belongs to the IlvD/Edd family. In terms of assembly, homodimer. Requires [2Fe-2S] cluster as cofactor. The cofactor is Mg(2+).

It carries out the reaction (2R)-2,3-dihydroxy-3-methylbutanoate = 3-methyl-2-oxobutanoate + H2O. The enzyme catalyses (2R,3R)-2,3-dihydroxy-3-methylpentanoate = (S)-3-methyl-2-oxopentanoate + H2O. The protein operates within amino-acid biosynthesis; L-isoleucine biosynthesis; L-isoleucine from 2-oxobutanoate: step 3/4. Its pathway is amino-acid biosynthesis; L-valine biosynthesis; L-valine from pyruvate: step 3/4. Functions in the biosynthesis of branched-chain amino acids. Catalyzes the dehydration of (2R,3R)-2,3-dihydroxy-3-methylpentanoate (2,3-dihydroxy-3-methylvalerate) into 2-oxo-3-methylpentanoate (2-oxo-3-methylvalerate) and of (2R)-2,3-dihydroxy-3-methylbutanoate (2,3-dihydroxyisovalerate) into 2-oxo-3-methylbutanoate (2-oxoisovalerate), the penultimate precursor to L-isoleucine and L-valine, respectively. This is Dihydroxy-acid dehydratase from Syntrophobacter fumaroxidans (strain DSM 10017 / MPOB).